The chain runs to 157 residues: Ribosomal RNA large subunit methyltransferase H (157 aa).

Residues leucine 73, glycine 105, and 124 to 129 (LSRMTF) contribute to the S-adenosyl-L-methionine site.

The protein belongs to the RNA methyltransferase RlmH family. In terms of assembly, homodimer.

It is found in the cytoplasm. It catalyses the reaction pseudouridine(1915) in 23S rRNA + S-adenosyl-L-methionine = N(3)-methylpseudouridine(1915) in 23S rRNA + S-adenosyl-L-homocysteine + H(+). In terms of biological role, specifically methylates the pseudouridine at position 1915 (m3Psi1915) in 23S rRNA. This is Ribosomal RNA large subunit methyltransferase H from Porphyromonas gingivalis (strain ATCC BAA-308 / W83).